The primary structure comprises 144 residues: Small ribosomal subunit protein uS12 (144 aa).

Asp103 bears the 3-methylthioaspartic acid mark. The tract at residues 125–144 is disordered; sequence QQGRSRYGAKKGKAAPAKKK. A compositionally biased stretch (basic residues) spans 131–144; sequence YGAKKGKAAPAKKK.

Belongs to the universal ribosomal protein uS12 family. In terms of assembly, part of the 30S ribosomal subunit. Contacts proteins S8 and S17. May interact with IF1 in the 30S initiation complex.

Functionally, with S4 and S5 plays an important role in translational accuracy. In terms of biological role, interacts with and stabilizes bases of the 16S rRNA that are involved in tRNA selection in the A site and with the mRNA backbone. Located at the interface of the 30S and 50S subunits, it traverses the body of the 30S subunit contacting proteins on the other side and probably holding the rRNA structure together. The combined cluster of proteins S8, S12 and S17 appears to hold together the shoulder and platform of the 30S subunit. This is Small ribosomal subunit protein uS12 from Dehalococcoides mccartyi (strain ATCC BAA-2100 / JCM 16839 / KCTC 5957 / BAV1).